Consider the following 189-residue polypeptide: Elongation factor P 2 (189 aa).

The protein belongs to the elongation factor P family.

It is found in the cytoplasm. It functions in the pathway protein biosynthesis; polypeptide chain elongation. Functionally, involved in peptide bond synthesis. Stimulates efficient translation and peptide-bond synthesis on native or reconstituted 70S ribosomes in vitro. Probably functions indirectly by altering the affinity of the ribosome for aminoacyl-tRNA, thus increasing their reactivity as acceptors for peptidyl transferase. In Lactobacillus johnsonii (strain CNCM I-12250 / La1 / NCC 533), this protein is Elongation factor P 2 (efp2).